The chain runs to 488 residues: MSYPGYPPTGYPPFPGYPPAGQESSFPPSGQYPYPSGFPPMGGGAYPQVPSSGYPGAGGYPAPGGYPAPGGYPGAPQPGGAPSYPGVPPGQGFGVPPGGAGFSGYPQPPSQSYGGGPAQVPLPGGFPGGQMPSQYPGGQPTYPSQINTESFPSYPVFSPVSLDYSSEPAAMTQGTQGTIRPAANFDAMRDAEILRKAMKGFGTDEQAIVDVVANRSNDQRQKIKAAFKTSYGKDLIKDLKSELSGNMEELILALFMPPTYYDAWTLRKAMQGAGTQERVLIEILCTRTNQEIREIVRCYQSEFGRDLEKDIRSDTSGHFERLLVSMCQGNRDENQSVNHQMAQEDAQRLYQAGEGRLGTDESCFNMILATRSFPQLRATMEAYSRMANRDLLSSVSREFSGYVESGLKTILQCALNRPAFFAERLYYAMKGAGTDDSTLVRIVVTRSEIDLVQIKQMFAQMYQKTLGTMIAGDTSGDYRRPLLAIVGQ.

Pro residues predominate over residues 1 to 18; sequence MSYPGYPPTGYPPFPGYP. Disordered stretches follow at residues 1-49 and 71-150; these read MSYP…YPQV and GYPG…NTES. The tract at residues 1-143 is repeat-rich region; that stretch reads MSYPGYPPTG…QYPGGQPTYP (143 aa). Positions 5 to 20 are 3 X 5 AA tandem repeats of G-Y-P-P-X; sequence GYPPTGYPPFPGYPPA. Residues 89 to 102 are compositionally biased toward gly residues; that stretch reads PGQGFGVPPGGAGF. Annexin repeat units follow at residues 185-256, 257-328, 340-412, and 416-487; these read FDAM…ALFM, PPTY…SMCQ, QMAQ…TILQ, and NRPA…AIVG. The residue at position 233 (Lys-233) is an N6-acetyllysine.

This sequence belongs to the annexin family. In terms of assembly, interacts with PDCD6.

In terms of biological role, calcium/phospholipid-binding protein which promotes membrane fusion and is involved in exocytosis. This Macaca fascicularis (Crab-eating macaque) protein is Annexin A7 (ANXA7).